The following is a 272-amino-acid chain: Shikimate dehydrogenase (NADP(+)) (272 aa).

Residues 14–16 (SKS) and Thr61 contribute to the shikimate site. The Proton acceptor role is filled by Lys65. An NADP(+)-binding site is contributed by Glu77. Shikimate contacts are provided by Asn86 and Asp102. Residues 126 to 130 (GAGGA), 149 to 154 (NRTVSR), and Met213 each bind NADP(+). Shikimate is bound at residue Tyr215. Gly237 is a binding site for NADP(+).

Belongs to the shikimate dehydrogenase family. Homodimer.

It catalyses the reaction shikimate + NADP(+) = 3-dehydroshikimate + NADPH + H(+). It functions in the pathway metabolic intermediate biosynthesis; chorismate biosynthesis; chorismate from D-erythrose 4-phosphate and phosphoenolpyruvate: step 4/7. Involved in the biosynthesis of the chorismate, which leads to the biosynthesis of aromatic amino acids. Catalyzes the reversible NADPH linked reduction of 3-dehydroshikimate (DHSA) to yield shikimate (SA). In Escherichia coli (strain SMS-3-5 / SECEC), this protein is Shikimate dehydrogenase (NADP(+)).